A 247-amino-acid polypeptide reads, in one-letter code: Fibroblast growth factor 14 (247 aa).

Disordered stretches follow at residues 1–37 and 216–247; these read MAAAIASGLIRQKRQAREQHWDRPSASRRRSSPSKNR and ETVPKAGVTPSKSTSASAIMNGGKPVNKCKTT. Positions 15 to 25 are enriched in basic and acidic residues; the sequence is QAREQHWDRPS.

The protein belongs to the heparin-binding growth factors family. As to quaternary structure, interacts with SCN8A. As to expression, brain and testis; widely distributed in the developing nervous system. In adult, high levels in the granular layer of the cerebellum, less in hippocampus and olfactory bulb.

It localises to the nucleus. Functionally, probably involved in nervous system development and function. The sequence is that of Fibroblast growth factor 14 (Fgf14) from Mus musculus (Mouse).